The chain runs to 815 residues: Dual specificity tyrosine-phosphorylation-regulated kinase mbk-2 (815 aa).

Disordered stretches follow at residues Met1–Arg49, Pro67–Thr146, Tyr185–His204, and Ala298–Glu395. Composition is skewed to polar residues over residues Phe7–Gly25 and Ser40–Arg49. Residues Ser68–Ser78 show a composition bias toward low complexity. 2 stretches are compositionally biased toward polar residues: residues Ser119–Leu140 and Gly190–His204. The segment covering Ser301–Gly316 has biased composition (low complexity). Residues Leu325 to Asp351 are compositionally biased toward polar residues. Ser361 carries the phosphoserine; by cdk-1 modification. Low complexity predominate over residues Ser363 to Gly391. The Protein kinase domain occupies Tyr460 to Leu773. ATP-binding positions include Ile466–Val474 and Lys489. The Proton acceptor role is filled by Asp586. Tyr620 is modified (phosphotyrosine; by autocatalysis).

It belongs to the protein kinase superfamily. CMGC Ser/Thr protein kinase family. MNB/DYRK subfamily. Part of a complex, consisting of pseudophosphatases egg-3, egg-4, egg-5 and kinase mbk-2. Interacts (via Tyr-618 and Tyr-620) with egg-4 (via tyrosine-protein phosphatase domain) and egg-5 (via tyrosine-protein phosphatase domain); mbk-2 tyrosine phosphorylation enhances the interaction. The interaction inhibits mbk-2 kinase activity and is required for mbk-2 oocyte cortex localization. Interacts (via N-terminus) with egg-3 (via tyrosine-protein phosphatase domain); the interaction does not affect mbk-2 kinase activity, is enhanced by mbk-2 tyrosine phosphorylation status and requires prior binding of mbk-2 to egg-4 and egg-5. It depends on Mg(2+) as a cofactor. Post-translationally, autophosphorylated.

The protein resides in the cytoplasm. Its subcellular location is the cell cortex. It catalyses the reaction L-seryl-[protein] + ATP = O-phospho-L-seryl-[protein] + ADP + H(+). The catalysed reaction is L-threonyl-[protein] + ATP = O-phospho-L-threonyl-[protein] + ADP + H(+). It carries out the reaction L-tyrosyl-[protein] + ATP = O-phospho-L-tyrosyl-[protein] + ADP + H(+). Its activity is regulated as follows. Activated during oocyte maturation by phosphorylation on Ser-361 by cdk-1. The pseudotyrosine phosphatases egg-4 and egg-5 sequester activated mbk-2 until the meiotic divisions and inhibit mbk-2 kinase activity directly, using a mixed-inhibition mechanism that does not involve tyrosine dephosphorylation. Functionally, required for oocyte-to-zygote transition in which it phosphorylates oocyte proteins, including mei-1, oma-1, oma-2, mex-5, and mex-6, modifying their activity and/or stability following meiosis. Through phosphorylation of P granule components including meg-1, promotes the disassembly of zygotic P granules in the anterior cytoplasm during zygote polarization, and thus plays a role in P granule distribution and segregation in early stage embryos following meiosis. Functions in both spindle positioning and in the posterior localization of cytoplasmic determinants, including pie-1, pos-1, and pgl-1, in early embryos. Involved in the asymmetric distribution of plk-1 at the 2-cell embryonic stage. The chain is Dual specificity tyrosine-phosphorylation-regulated kinase mbk-2 from Caenorhabditis briggsae.